The chain runs to 105 residues: uncharacterized protein (105 aa).

2 helical membrane passes run 10–30 and 48–68; these read YVVFIISLIVLLIIFYVFKIG and YPLAISLVIWVIWYFLLYPPS.

The protein localises to the membrane. This is an uncharacterized protein from Acanthamoeba polyphaga mimivirus (APMV).